A 253-amino-acid polypeptide reads, in one-letter code: Major prion protein (253 aa).

The N-terminal stretch at 1–22 (MANLGCWMLVLFVATWSDLGLC) is a signal peptide. Residues 23-38 (KKRPKPGGWNTGGSRY) are interaction with ADGRG6. An interaction with GRB2, ERI3 and SYN1 region spans residues 23–230 (KKRPKPGGWN…ESQAYYQRGS (208 aa)). Positions 26–108 (PKPGGWNTGG…WNKPSKPKTN (83 aa)) are disordered. Tandem repeats lie at residues 51 to 59 (PQGGGGWGQ), 60 to 67 (PHGGGWGQ), 68 to 75 (PHGGGWGQ), 76 to 83 (PHGGGWGQ), and 84 to 91 (PHGGGWGQ). The segment at 51–91 (PQGGGGWGQPHGGGWGQPHGGGWGQPHGGGWGQPHGGGWGQ) is 5 X 8 AA tandem repeats of P-H-G-G-G-W-G-Q. Gly residues predominate over residues 52 to 95 (QGGGGWGQPHGGGWGQPHGGGWGQPHGGGWGQPHGGGWGQGGGT). 12 residues coordinate Cu(2+): His61, Gly62, Gly63, His69, Gly70, Gly71, His77, Gly78, Gly79, His85, Gly86, and Gly87. Cys179 and Cys214 form a disulfide bridge. N-linked (GlcNAc...) asparagine glycosylation is found at Asn181 and Asn197. A lipid anchor (GPI-anchor amidated serine) is attached at Ser230. Residues 231 to 253 (SMVLFSSPPVILLISFLIFLIVG) constitute a propeptide, removed in mature form.

The protein belongs to the prion family. In terms of assembly, monomer and homodimer. Has a tendency to aggregate into amyloid fibrils containing a cross-beta spine, formed by a steric zipper of superposed beta-strands. Soluble oligomers may represent an intermediate stage on the path to fibril formation. Copper binding may promote oligomerization. Interacts with GRB2, APP, ERI3/PRNPIP and SYN1. Mislocalized cytosolically exposed PrP interacts with MGRN1; this interaction alters MGRN1 subcellular location and causes lysosomal enlargement. Interacts with APP. Interacts with KIAA1191. Interacts with ADGRG6.

It is found in the cell membrane. The protein localises to the golgi apparatus. In terms of biological role, its primary physiological function is unclear. May play a role in neuronal development and synaptic plasticity. May be required for neuronal myelin sheath maintenance. May promote myelin homeostasis through acting as an agonist for ADGRG6 receptor. May play a role in iron uptake and iron homeostasis. Soluble oligomers are toxic to cultured neuroblastoma cells and induce apoptosis (in vitro). Association with GPC1 (via its heparan sulfate chains) targets PRNP to lipid rafts. Also provides Cu(2+) or Zn(2+) for the ascorbate-mediated GPC1 deaminase degradation of its heparan sulfate side chains. This chain is Major prion protein (PRNP), found in Gorilla gorilla gorilla (Western lowland gorilla).